The following is a 197-amino-acid chain: Phosphoheptose isomerase (197 aa).

In terms of domain architecture, SIS spans methionine 36–glutamate 197. Asparagine 51–glycine 53 is a binding site for substrate. 2 residues coordinate Zn(2+): histidine 60 and glutamate 64. Residues glutamate 64, asparagine 93–aspartate 94, serine 119–serine 121, serine 124, and glutamine 174 each bind substrate. 2 residues coordinate Zn(2+): glutamine 174 and histidine 182.

It belongs to the SIS family. GmhA subfamily. As to quaternary structure, homotetramer. Zn(2+) is required as a cofactor.

It is found in the cytoplasm. The enzyme catalyses 2 D-sedoheptulose 7-phosphate = D-glycero-alpha-D-manno-heptose 7-phosphate + D-glycero-beta-D-manno-heptose 7-phosphate. It functions in the pathway carbohydrate biosynthesis; D-glycero-D-manno-heptose 7-phosphate biosynthesis; D-glycero-alpha-D-manno-heptose 7-phosphate and D-glycero-beta-D-manno-heptose 7-phosphate from sedoheptulose 7-phosphate: step 1/1. Catalyzes the isomerization of sedoheptulose 7-phosphate in D-glycero-D-manno-heptose 7-phosphate. This Azoarcus sp. (strain BH72) protein is Phosphoheptose isomerase.